Here is a 183-residue protein sequence, read N- to C-terminus: SAGA-associated factor 11 homolog (183 aa).

The SGF11-type zinc-finger motif lies at 98–119 (CSCPNCNRIVAASRFAPHLEKC). Residues 140-167 (GGNYFGADEDDEDDADWSGEKRKKKIAP) form a disordered region. A compositionally biased stretch (acidic residues) spans 146–156 (ADEDDEDDADW).

The protein belongs to the SGF11 family. Component of some SAGA transcription coactivator-HAT complexes. Within the SAGA complex, participates in a subcomplex of SAGA called the DUB module (deubiquitination module).

It is found in the nucleus. Functionally, component of the transcription regulatory histone acetylation (HAT) complex SAGA, a multiprotein complex that activates transcription by remodeling chromatin and mediating histone acetylation and deubiquitination. Within the SAGA complex, participates in a subcomplex that specifically deubiquitinates histone H2B. The SAGA complex is recruited to specific gene promoters by activators, where it is required for transcription. This Culex quinquefasciatus (Southern house mosquito) protein is SAGA-associated factor 11 homolog.